The sequence spans 1093 residues: Isoleucine--tRNA ligase, chloroplastic/mitochondrial (1093 aa).

Positions 69–103 are disordered; it reads PNNEFGHSSKRRSRGPVMAAKKASEGEKQEDGKYK. Residues 90 to 103 show a composition bias toward basic and acidic residues; sequence KASEGEKQEDGKYK. Positions 155–165 match the 'HIGH' region motif; the sequence is PYANGDLHMGH. E682 contacts L-isoleucyl-5'-AMP. Residues 723 to 727 carry the 'KMSKS' region motif; sequence KMSKS. K726 is a binding site for ATP. The Zn(2+) site is built by C1050, C1053, C1070, and C1073.

It belongs to the class-I aminoacyl-tRNA synthetase family.

It localises to the plastid. Its subcellular location is the chloroplast. It is found in the mitochondrion. The enzyme catalyses tRNA(Ile) + L-isoleucine + ATP = L-isoleucyl-tRNA(Ile) + AMP + diphosphate. This Arabidopsis thaliana (Mouse-ear cress) protein is Isoleucine--tRNA ligase, chloroplastic/mitochondrial.